The following is a 454-amino-acid chain: Bifunctional protein GlmU (454 aa).

Residues 1–226 are pyrophosphorylase; it reads MSTTVIILAA…AFEVEGVNDR (226 aa). Residues 8 to 11, lysine 22, glutamine 73, 78 to 79, 100 to 102, glycine 137, glutamate 151, asparagine 166, and asparagine 224 each bind UDP-N-acetyl-alpha-D-glucosamine; these read LAAG, GT, and YGD. Residue aspartate 102 participates in Mg(2+) binding. Asparagine 224 is a Mg(2+) binding site. A linker region spans residues 227-247; the sequence is LQLAALEREFQKQQAKELMQQ. The N-acetyltransferase stretch occupies residues 248-454; that stretch reads GVTFADPARF…NYQRPQKLKK (207 aa). UDP-N-acetyl-alpha-D-glucosamine-binding residues include arginine 330 and lysine 348. Histidine 360 (proton acceptor) is an active-site residue. UDP-N-acetyl-alpha-D-glucosamine contacts are provided by tyrosine 363 and asparagine 374. Acetyl-CoA-binding positions include alanine 377, 383–384, serine 402, alanine 420, and arginine 437; that span reads NY.

In the N-terminal section; belongs to the N-acetylglucosamine-1-phosphate uridyltransferase family. It in the C-terminal section; belongs to the transferase hexapeptide repeat family. As to quaternary structure, homotrimer. Mg(2+) is required as a cofactor.

It localises to the cytoplasm. It carries out the reaction alpha-D-glucosamine 1-phosphate + acetyl-CoA = N-acetyl-alpha-D-glucosamine 1-phosphate + CoA + H(+). The catalysed reaction is N-acetyl-alpha-D-glucosamine 1-phosphate + UTP + H(+) = UDP-N-acetyl-alpha-D-glucosamine + diphosphate. It functions in the pathway nucleotide-sugar biosynthesis; UDP-N-acetyl-alpha-D-glucosamine biosynthesis; N-acetyl-alpha-D-glucosamine 1-phosphate from alpha-D-glucosamine 6-phosphate (route II): step 2/2. Its pathway is nucleotide-sugar biosynthesis; UDP-N-acetyl-alpha-D-glucosamine biosynthesis; UDP-N-acetyl-alpha-D-glucosamine from N-acetyl-alpha-D-glucosamine 1-phosphate: step 1/1. It participates in bacterial outer membrane biogenesis; LPS lipid A biosynthesis. In terms of biological role, catalyzes the last two sequential reactions in the de novo biosynthetic pathway for UDP-N-acetylglucosamine (UDP-GlcNAc). The C-terminal domain catalyzes the transfer of acetyl group from acetyl coenzyme A to glucosamine-1-phosphate (GlcN-1-P) to produce N-acetylglucosamine-1-phosphate (GlcNAc-1-P), which is converted into UDP-GlcNAc by the transfer of uridine 5-monophosphate (from uridine 5-triphosphate), a reaction catalyzed by the N-terminal domain. The chain is Bifunctional protein GlmU from Acinetobacter baumannii (strain ACICU).